Consider the following 187-residue polypeptide: Dihydrofolate reductase (187 aa).

In terms of domain architecture, DHFR spans 4–185 (PLNCIVAVSQ…IKYKFEVYEK (182 aa)). The tract at residues 8-37 (IVAVSQNMGIGKNGDFPWPMLRNEFKYFQR) is involved in methotrexate binding. NADP(+) is bound by residues alanine 10 and 16 to 22 (GIGKNGD). 31 to 36 (EFKYFQ) is a substrate binding site. The residue at position 33 (lysine 33) is an N6-acetyllysine; alternate. Lysine 33 is subject to N6-succinyllysine; alternate. 55-57 (RKT) contributes to the NADP(+) binding site. The tract at residues 60–70 (SIPEKNRPLKD) is involved in methotrexate binding. Arginine 71 is a substrate binding site. Residues 77–79 (SRE) and 117–124 (GGSSVYKE) contribute to the NADP(+) site. Position 137 (threonine 137) interacts with methotrexate.

The protein belongs to the dihydrofolate reductase family. As to quaternary structure, homodimer.

The protein resides in the mitochondrion. The protein localises to the cytoplasm. The enzyme catalyses (6S)-5,6,7,8-tetrahydrofolate + NADP(+) = 7,8-dihydrofolate + NADPH + H(+). The protein operates within cofactor biosynthesis; tetrahydrofolate biosynthesis; 5,6,7,8-tetrahydrofolate from 7,8-dihydrofolate: step 1/1. Functionally, key enzyme in folate metabolism. Contributes to the de novo mitochondrial thymidylate biosynthesis pathway. Catalyzes an essential reaction for de novo glycine and purine synthesis, and for DNA precursor synthesis. Binds its own mRNA. The chain is Dihydrofolate reductase (DHFR) from Mesocricetus auratus (Golden hamster).